We begin with the raw amino-acid sequence, 66 residues long: Photosystem II reaction center protein J (66 aa).

The segment at 1-27 (MSGKKSGLPDGRVPDRNPDGTPAVPWK) is disordered. Residues 37–57 (LWLVATAGGMAVMFVVGLFFY) form a helical membrane-spanning segment.

This sequence belongs to the PsbJ family. In terms of assembly, PSII is composed of 1 copy each of membrane proteins PsbA, PsbB, PsbC, PsbD, PsbE, PsbF, PsbH, PsbI, PsbJ, PsbK, PsbL, PsbM, PsbT, PsbX, PsbY, PsbZ, Psb30/Ycf12, peripheral proteins PsbO, CyanoQ (PsbQ), PsbU, PsbV and a large number of cofactors. It forms dimeric complexes.

The protein resides in the cellular thylakoid membrane. In terms of biological role, one of the components of the core complex of photosystem II (PSII). PSII is a light-driven water:plastoquinone oxidoreductase that uses light energy to abstract electrons from H(2)O, generating O(2) and a proton gradient subsequently used for ATP formation. It consists of a core antenna complex that captures photons, and an electron transfer chain that converts photonic excitation into a charge separation. This Synechococcus sp. (strain RCC307) protein is Photosystem II reaction center protein J.